A 371-amino-acid chain; its full sequence is MPLSLFRRVLLAVLLLVIIWTLFGPSGLGEELLSLSLASLLPAPASPGPPLALPRLLISNSHACGGSGPPPFLLILVCTAPEHLNQRNAIRASWGAIREARGFRVQTLFLLGKPRRQQLADLSSESAAHRDILQASFQDSYRNLTLKTLSGLNWVNKYCPMARYILKTDDDVYVNVPELVSELIQRGGPSEQWQKGKEAQEETTAIHEEHRGQAVPLLYLGRVHWRVRPTRTPESRHHVSEELWPENWGPFPPYASGTGYVLSISAVQLILKVASRAPPLPLEDVFVGVSARRGGLAPTHCVKLAGATHYPLDRCCYGKFLLTSHKVDPWQMQEAWKLVSGMNGERTAPFCSWLQGFLGTLRCRFIAWFSS.

The Cytoplasmic portion of the chain corresponds to 1–4 (MPLS). The helical; Signal-anchor for type II membrane protein transmembrane segment at 5–25 (LFRRVLLAVLLLVIIWTLFGP) threads the bilayer. Residues 26–371 (SGLGEELLSL…RCRFIAWFSS (346 aa)) are Lumenal-facing. Asparagine 143 is a glycosylation site (N-linked (GlcNAc...) asparagine).

It belongs to the glycosyltransferase 31 family. In terms of tissue distribution, expressed in heart, brain, spleen, kidney, lung and testis.

The protein localises to the golgi apparatus membrane. It catalyses the reaction a ganglioside GM2 (d18:1(4E)) + UDP-alpha-D-galactose = a ganglioside GM1 (d18:1(4E)) + UDP + H(+). It carries out the reaction a ganglioside GM2 + UDP-alpha-D-galactose = a ganglioside GM1 + UDP + H(+). The enzyme catalyses a ganglioside GD2 (d18:1(4E)) + UDP-alpha-D-galactose = a ganglioside GD1b (d18:1(4E)) + UDP + H(+). The catalysed reaction is a ganglioside GA2 (d18:1(4E)) + UDP-alpha-D-galactose = a ganglioside GA1 (d18:1(4E)) + UDP + H(+). The protein operates within protein modification; protein glycosylation. Functionally, involved in GM1/GD1B/GA1 ganglioside biosynthesis. The sequence is that of Beta-1,3-galactosyltransferase 4 from Mus musculus (Mouse).